We begin with the raw amino-acid sequence, 48 residues long: Small, acid-soluble spore protein P (48 aa).

The span at 1–12 shows a compositional bias: basic and acidic residues; the sequence is MTNKNTSKDMHK. Residues 1 to 48 form a disordered region; that stretch reads MTNKNTSKDMHKNAPKGHNPGQPEPLSGSKKVKNRNHTRQKHNTSHDM. The segment covering 30-48 has biased composition (basic residues); it reads KKVKNRNHTRQKHNTSHDM.

It belongs to the SspP family.

It localises to the spore core. The polypeptide is Small, acid-soluble spore protein P (Bacillus velezensis (strain DSM 23117 / BGSC 10A6 / LMG 26770 / FZB42) (Bacillus amyloliquefaciens subsp. plantarum)).